We begin with the raw amino-acid sequence, 466 residues long: ATP synthase subunit beta (466 aa).

ATP is bound at residue 148–155 (GGAGVGKT).

This sequence belongs to the ATPase alpha/beta chains family. As to quaternary structure, F-type ATPases have 2 components, CF(1) - the catalytic core - and CF(0) - the membrane proton channel. CF(1) has five subunits: alpha(3), beta(3), gamma(1), delta(1), epsilon(1). CF(0) has three main subunits: a(1), b(2) and c(9-12). The alpha and beta chains form an alternating ring which encloses part of the gamma chain. CF(1) is attached to CF(0) by a central stalk formed by the gamma and epsilon chains, while a peripheral stalk is formed by the delta and b chains.

The protein localises to the cell inner membrane. The catalysed reaction is ATP + H2O + 4 H(+)(in) = ADP + phosphate + 5 H(+)(out). Its function is as follows. Produces ATP from ADP in the presence of a proton gradient across the membrane. The catalytic sites are hosted primarily by the beta subunits. The polypeptide is ATP synthase subunit beta (Xylella fastidiosa (strain M23)).